Here is a 632-residue protein sequence, read N- to C-terminus: Phosphomethylpyrimidine synthase (632 aa).

A compositionally biased stretch (polar residues) spans methionine 1–alanine 13. The tract at residues methionine 1–phenylalanine 26 is disordered. Substrate is bound by residues asparagine 221, methionine 250, tyrosine 279, histidine 315, serine 335–glycine 337, aspartate 376–arginine 379, and glutamate 415. Position 419 (histidine 419) interacts with Zn(2+). Tyrosine 442 is a substrate binding site. Histidine 483 provides a ligand contact to Zn(2+). 3 residues coordinate [4Fe-4S] cluster: cysteine 563, cysteine 566, and cysteine 571.

Belongs to the ThiC family. In terms of assembly, homodimer. [4Fe-4S] cluster serves as cofactor.

The enzyme catalyses 5-amino-1-(5-phospho-beta-D-ribosyl)imidazole + S-adenosyl-L-methionine = 4-amino-2-methyl-5-(phosphooxymethyl)pyrimidine + CO + 5'-deoxyadenosine + formate + L-methionine + 3 H(+). It functions in the pathway cofactor biosynthesis; thiamine diphosphate biosynthesis. In terms of biological role, catalyzes the synthesis of the hydroxymethylpyrimidine phosphate (HMP-P) moiety of thiamine from aminoimidazole ribotide (AIR) in a radical S-adenosyl-L-methionine (SAM)-dependent reaction. This chain is Phosphomethylpyrimidine synthase, found in Afipia carboxidovorans (strain ATCC 49405 / DSM 1227 / KCTC 32145 / OM5) (Oligotropha carboxidovorans).